A 303-amino-acid chain; its full sequence is MAGMSLQHPWAFAFGLLGNIISFMTYLAPLPTFYRIYKSKSTQGFQSVPYVVALFSAMLWIYYALLKSDECLLITINSAGCVIETIYIAVYLVYAPKKAKMFTAKLLLLVNVGVFGLILLLTLLLSAGDRRIVVLGWVCVGFSVSVFVAPLSIIRLVVRTKSVEFMPFSLSFSLTISAVVWFLYGLLIKDKYVALPNVLGFSFGVIQMGLYAMYRNSTPKAVLTKEVEAATATGDDDHSAAGVKEHVVNIAKLSAAVDVVKTREVHPVDVESPPAEAPPEEDDKAAAATAAAVAGAGEKKVAA.

Topologically, residues 1–9 (MAGMSLQHP) are extracellular. A helical membrane pass occupies residues 10 to 30 (WAFAFGLLGNIISFMTYLAPL). The MtN3/slv 1 domain maps to 13-98 (AFGLLGNIIS…AVYLVYAPKK (86 aa)). Residues 31 to 44 (PTFYRIYKSKSTQG) lie on the Cytoplasmic side of the membrane. Residues 45–65 (FQSVPYVVALFSAMLWIYYAL) traverse the membrane as a helical segment. At 66-72 (LKSDECL) the chain is on the extracellular side. A helical membrane pass occupies residues 73-93 (LITINSAGCVIETIYIAVYLV). Residues 94–105 (YAPKKAKMFTAK) lie on the Cytoplasmic side of the membrane. Residues 106-126 (LLLLVNVGVFGLILLLTLLLS) traverse the membrane as a helical segment. At 127-133 (AGDRRIV) the chain is on the extracellular side. A helical membrane pass occupies residues 134–154 (VLGWVCVGFSVSVFVAPLSII). The MtN3/slv 2 domain maps to 134-217 (VLGWVCVGFS…MGLYAMYRNS (84 aa)). Topologically, residues 155-167 (RLVVRTKSVEFMP) are cytoplasmic. Residues 168–188 (FSLSFSLTISAVVWFLYGLLI) form a helical membrane-spanning segment. Topologically, residues 189 to 192 (KDKY) are extracellular. The helical transmembrane segment at 193 to 213 (VALPNVLGFSFGVIQMGLYAM) threads the bilayer. Residues 214 to 303 (YRNSTPKAVL…AGAGEKKVAA (90 aa)) lie on the Cytoplasmic side of the membrane. Residues 266 to 290 (HPVDVESPPAEAPPEEDDKAAAATA) are disordered.

The protein belongs to the SWEET sugar transporter family. Forms homooligomers and/or heterooligomers.

It is found in the cell membrane. In terms of biological role, mediates both low-affinity uptake and efflux of sugar across the plasma membrane. Its function is as follows. Confers blight susceptibility. Confers TAL effector-mediated susceptibility to Xanthomonas oryzae pv. oryzae. The protein is Bidirectional sugar transporter SWEET14 (SWEET14) of Oryza sativa subsp. japonica (Rice).